The chain runs to 539 residues: MALTQVETEIVPVSVDGETLTVEAVRRVAEERATVDVPAESIAKAQKSREIFEGIAEQNIPIYGVTTGYGEMIYMQVDKSKEVELQTNLVRSHSAGVGPLFAEDEARAIVAARLNTLAKGHSAVRPIILERLAQYLNEGITPAIPEIGSLGASGDLAPLSHVASTLIGEGYVLRDGRPVETAQVLAERGIEPLELRFKEGLALINGTSGMTGLGSLVVGRALEQAQQAEIVTALLIEAVRGSTSPFLAEGHDIARPHEGQIDTAANMRALMRGSGLTVEHADLRRELQKDKEAGKDVQRSEIYLQKAYSLRAIPQVVGAVRDTLYHARHKLRIELNSANDNPLFFEGKEIFHGANFHGQPIAFAMDFVTIALTQLGVLAERQINRVLNRHLSYGLPEFLVSGDPGLHSGFAGAQYPATALVAENRTIGPASTQSVPSNGDNQDVVSMGLISARNARRVLSNNNKILAVEYLAAAQAVDISGRFDGLSPAAKATYEAVRRLVPTLGVDRYMADDIELVADALSRGEFLRAIARETDIQLR.

Residue Tyr-63 is the Proton donor/acceptor of the active site. His-93 lines the substrate pocket. The 5-imidazolinone (Ala-Gly) cross-link spans 152–154 (ASG). Residue Ser-153 is modified to 2,3-didehydroalanine (Ser). Positions 205 and 311 each coordinate substrate.

It belongs to the TAL/TAM family. As to quaternary structure, homotetramer; dimer of dimers. In terms of processing, contains an active site 4-methylidene-imidazol-5-one (MIO), which is formed autocatalytically by cyclization and dehydration of residues Ala-Ser-Gly.

It carries out the reaction L-tyrosine = 3-amino-3-(4-hydroxyphenyl)propanoate. The enzyme catalyses L-tyrosine = (E)-4-coumarate + NH4(+). Involved in the biosynthesis of the enediyne antitumor antibiotic C-1027. Catalyzes the MIO-dependent deamination of L-tyrosine generating the corresponding alpha,beta-unsaturated acid, (S)-beta-tyrosine. This is MIO-dependent tyrosine 2,3-aminomutase from Streptomyces globisporus.